The primary structure comprises 738 residues: Catalase-peroxidase (738 aa).

An N-terminal signal peptide occupies residues 1–24; sequence MEPLFPKRLLSIAVLCVASATAQA. Positions 104-226 form a cross-link, tryptophyl-tyrosyl-methioninium (Trp-Tyr) (with M-252); it reads WHAAGTYRMI…FGATEMGLIY (123 aa). The active-site Proton acceptor is histidine 105. The interval 191 to 213 is disordered; that stretch reads EEVNWGPEGQWLTDRRHSGDRKL. A compositionally biased stretch (basic and acidic residues) spans 203 to 213; the sequence is TDRRHSGDRKL. The segment at residues 226-252 is a cross-link (tryptophyl-tyrosyl-methioninium (Tyr-Met) (with W-104)); sequence YVNPEGPHGNPDPIAAAHDIRQAFGRM. Histidine 267 is a heme b binding site.

The protein belongs to the peroxidase family. Peroxidase/catalase subfamily. In terms of assembly, homodimer or homotetramer. Heme b is required as a cofactor. Formation of the three residue Trp-Tyr-Met cross-link is important for the catalase, but not the peroxidase activity of the enzyme.

The catalysed reaction is H2O2 + AH2 = A + 2 H2O. It carries out the reaction 2 H2O2 = O2 + 2 H2O. Bifunctional enzyme with both catalase and broad-spectrum peroxidase activity. The chain is Catalase-peroxidase from Saccharophagus degradans (strain 2-40 / ATCC 43961 / DSM 17024).